The following is a 393-amino-acid chain: Erythronate-4-phosphate dehydrogenase (393 aa).

Positions 57 and 79 each coordinate substrate. Residue Asp159 participates in NAD(+) binding. Arg229 is an active-site residue. Asp253 contributes to the NAD(+) binding site. Glu258 is an active-site residue. Residue His275 is the Proton donor of the active site. Residue Gly278 participates in NAD(+) binding. Tyr279 contacts substrate.

It belongs to the D-isomer specific 2-hydroxyacid dehydrogenase family. PdxB subfamily. In terms of assembly, homodimer.

The protein resides in the cytoplasm. It catalyses the reaction 4-phospho-D-erythronate + NAD(+) = (R)-3-hydroxy-2-oxo-4-phosphooxybutanoate + NADH + H(+). The protein operates within cofactor biosynthesis; pyridoxine 5'-phosphate biosynthesis; pyridoxine 5'-phosphate from D-erythrose 4-phosphate: step 2/5. Its function is as follows. Catalyzes the oxidation of erythronate-4-phosphate to 3-hydroxy-2-oxo-4-phosphonooxybutanoate. The chain is Erythronate-4-phosphate dehydrogenase from Colwellia psychrerythraea (strain 34H / ATCC BAA-681) (Vibrio psychroerythus).